The primary structure comprises 595 residues: Pyranose dehydrogenase (595 aa).

The signal sequence occupies residues 1–21 (MARFNARLFSIAILGFQVARS). N-linked (GlcNAc...) asparagine glycosylation is found at asparagine 95 and asparagine 110. Histidine 123 bears the Tele-8alpha-FAD histidine mark. Residues asparagine 195, asparagine 337, asparagine 367, asparagine 502, and asparagine 510 are each glycosylated (N-linked (GlcNAc...) asparagine). Residue histidine 530 is the Proton acceptor of the active site. N-linked (GlcNAc...) asparagine glycosylation occurs at asparagine 541. Histidine 574 is a catalytic residue.

It belongs to the GMC oxidoreductase family. As to quaternary structure, monomer. The cofactor is FAD. N-glycosylated.

It localises to the secreted. It catalyses the reaction pyranose + acceptor = pyranos-2-ulose + reduced acceptor.. The catalysed reaction is pyranose + acceptor = pyranos-3-ulose + reduced acceptor.. The enzyme catalyses pyranose + acceptor = pyranos-2,3-diulose + reduced acceptor.. It carries out the reaction a pyranoside + acceptor = a pyranosid-3-ulose + reduced acceptor.. It catalyses the reaction a pyranoside + acceptor = a pyranosid-3,4-diulose + reduced acceptor.. Catalyzes the single-oxidation or sequential double oxidation reaction of carbohydrates primarily at carbon-2 and/or carbon-3 with the concomitant reduction of the flavin. The enzyme exhibits a broad sugar substrate specificity, oxidizing different aldopyranoses to the corresponding C-1, C-2, C-3 or C-1,2, C-2,3 and C-3,4 (di)dehydro sugars with substrate-specific regioselectivity. Accepts only a narrow range of electron acceptors such as substituted benzoquinones and complexed metal ions and reacts extremely slowly with O(2) as acceptor. May play a role in the natural recycling of plant matter by oxidizing all major monosaccharides in lignocellulose and by reducing quinone compounds or reactive radical species generated during lignin depolymerization. The chain is Pyranose dehydrogenase from Agaricus campestris (Field mushroom).